The sequence spans 191 residues: Recombination protein RecR (191 aa).

The C4-type zinc-finger motif lies at 51–66 (CQTCFHLSADPECEIC). Positions 74–168 (GVICVVADSR…SVSRIAYGLP (95 aa)) constitute a Toprim domain.

Belongs to the RecR family.

May play a role in DNA repair. It seems to be involved in an RecBC-independent recombinational process of DNA repair. It may act with RecF and RecO. In Synechococcus sp. (strain CC9605), this protein is Recombination protein RecR.